We begin with the raw amino-acid sequence, 263 residues long: Phosphatidylglycerol--prolipoprotein diacylglyceryl transferase (263 aa).

The next 4 membrane-spanning stretches (helical) occupy residues 6–26, 50–70, 85–105, and 112–132; these read VIFS…VLGI, LLTA…VLIY, TWEG…AVII, and IPIF…LLLG. Residue Arg133 participates in a 1,2-diacyl-sn-glycero-3-phospho-(1'-sn-glycerol) binding. 3 consecutive transmembrane segments (helical) span residues 169–189, 197–217, and 233–253; these read LYEA…LFYL, GATT…VEFF, and MGQL…LGAL.

The protein belongs to the Lgt family.

The protein localises to the cell membrane. It carries out the reaction L-cysteinyl-[prolipoprotein] + a 1,2-diacyl-sn-glycero-3-phospho-(1'-sn-glycerol) = an S-1,2-diacyl-sn-glyceryl-L-cysteinyl-[prolipoprotein] + sn-glycerol 1-phosphate + H(+). It functions in the pathway protein modification; lipoprotein biosynthesis (diacylglyceryl transfer). Its function is as follows. Catalyzes the transfer of the diacylglyceryl group from phosphatidylglycerol to the sulfhydryl group of the N-terminal cysteine of a prolipoprotein, the first step in the formation of mature lipoproteins. In Wolbachia pipientis subsp. Culex pipiens (strain wPip), this protein is Phosphatidylglycerol--prolipoprotein diacylglyceryl transferase.